A 2211-amino-acid chain; its full sequence is Coagulation factor V (2211 aa).

An N-terminal signal peptide occupies residues 1 to 28 (MFLACPGFWVLVVLGSSWAGWGNLGAEA). 4 Plastocyanin-like domains span residues 30-193 (KLRQ…LLIC), 203-327 (TQKM…IDIK), 348-525 (KRWE…LLIC), and 535-686 (IQRA…FRDA). 2 consecutive F5/8 type A domains span residues 30–327 (KLRQ…IDIK) and 348–686 (KRWE…FRDA). Ca(2+) is bound by residues D139 and D140. A disulfide bridge links C167 with C193. Residues N225, N239, N297, N382, and N460 are each glycosylated (N-linked (GlcNAc...) asparagine). Residues C248 and C329 are joined by a disulfide bond. A disulfide bond links C499 and C525. N553 and N587 each carry an N-linked (GlcNAc...) asparagine glycan. A disulfide bond links C607 and C688. Position 644 is a phosphothreonine (T644). Positions 696–1564 (SYEIIYEPSG…PDNIAAWYLR (869 aa)) are b. Residues Y697, Y701, and Y730 each carry the sulfotyrosine modification. Residues 742-1564 (SFRNSSLNQE…PDNIAAWYLR (823 aa)) constitute a propeptide, activation peptide (connecting region). 4 N-linked (GlcNAc...) asparagine glycosylation sites follow: N745, N756, N774, and N780. A disordered region spans residues 814–844 (LEHAGLDKNSALNPPMAEHSSPYSEDPREDH). N-linked (GlcNAc...) asparagine glycans are attached at residues N902, N952, and N964. The span at 954 to 969 (TVNKLPNSPQNDSRTW) shows a compositional bias: polar residues. A disordered region spans residues 954–1039 (TVNKLPNSPQ…PLSPRSFHPL (86 aa)). Residues 995-1009 (PLQDRQDRRNSRLKE) show a composition bias toward basic and acidic residues. Residues N1044, N1053, N1062, N1071, N1078, and N1094 are each glycosylated (N-linked (GlcNAc...) asparagine). 2 disordered regions span residues 1084–1162 (SLPD…IPNY) and 1195–1471 (QPSI…FGQT). 2 stretches are compositionally biased toward polar residues: residues 1091 to 1103 (TSPN…TSSP) and 1127 to 1160 (THST…SQIP). 30 repeat units span residues 1124–1137 (SDPT…SNRS), 1138–1151 (PDPT…SNRS), 1188–1196 (ATSLDLSQP), 1197–1205 (SISPDLGQM), 1206–1214 (ALSPDPGQE), 1215–1223 (SLSPDLGQT), 1224–1232 (SLSPDLSQE), 1233–1241 (SLSPDLGQT), 1242–1250 (ALSPDPSQE), 1251–1259 (SLSPDLGQT), 1260–1268 (ALSPDPSQE), 1269–1277 (SLSPDLGQT), 1278–1286 (ALSPDPGQE), 1287–1295 (SLSPDLGQT), 1296–1304 (SLSPDLSQE), 1305–1313 (SLSPDLGQT), 1314–1322 (ALSPDPSQE), 1323–1331 (SLSPDLGQT), 1332–1340 (ALSPDPSQE), 1341–1349 (SLSPDLGQT), 1350–1358 (SLSPDLGQE), 1359–1367 (SLSPDLGQT), 1368–1376 (ALSPDPSQE), 1377–1385 (SLSPDLGQT), 1386–1394 (SLSPDLGQE), 1395–1403 (SLSPDLGQT), 1404–1412 (ALSPDLSQE), 1413–1421 (SLSPDLGQT), 1422–1430 (PLSPDLSLE), and 1431–1439 (SLSPDLSQL). Residues 1124–1151 (SDPTHSTTAPSNRSPDPTHSTTAPSNRS) form a 2 X 14 AA tandem repeats region. The tract at residues 1188–1453 (ATSLDLSQPS…TSPPLDLNQT (266 aa)) is 30 X 9 AA approximate tandem repeats of [AS]-L-S-P-D-[LP]-[GS]-Q-[TE]. Polar residues-rich tracts occupy residues 1214-1234 (ESLS…QESL), 1241-1252 (TALSPDPSQESL), 1259-1270 (TALSPDPSQESL), 1286-1306 (ESLS…QESL), 1313-1324 (TALSPDPSQESL), 1331-1352 (TALS…TSLS), 1367-1388 (TALS…TSLS), and 1403-1414 (TALSPDLSQESL). Residues 1422-1441 (PLSPDLSLESLSPDLSQLDL) are compositionally biased toward low complexity. Residues 1440 to 1444 (DLKQT) form a 2-29; truncated repeat. The segment covering 1442-1463 (KQTSPPLDLNQTSHTSESSQSL) has biased composition (polar residues). One copy of the 2-30 repeat lies at 1445 to 1453 (SPPLDLNQT). 2 N-linked (GlcNAc...) asparagine glycosylation sites follow: N1451 and N1490. A sulfotyrosine mark is found at Y1513, Y1529, Y1537, and Y1541. N-linked (GlcNAc...) asparagine glycans are attached at residues N1550 and N1690. 2 Plastocyanin-like domains span residues 1569–1738 (NRKY…LLIC) and 1748–1890 (NMPV…FLIV). Residues 1569-1890 (NRKYYYIAAE…AGMQTPFLIV (322 aa)) enclose the F5/8 type A 3 domain. C1712 and C1738 form a disulfide bridge. 2 residues coordinate Cu cation: H1830 and H1832. N1839 carries N-linked (GlcNAc...) asparagine glycosylation. Cu cation is bound at residue D1872. Cystine bridges form between C1894/C2048 and C2053/C2208. F5/8 type C domains lie at 1894 to 2048 (CKMP…LQGC) and 2053 to 2208 (CSTP…LFGC). N-linked (GlcNAc...) asparagine glycosylation is found at N1997 and N2196.

Belongs to the multicopper oxidase family. In terms of assembly, factor Va, the activated form of factor V, is composed of a heavy chain and a light chain, non-covalently bound. The interaction between the two chains is calcium-dependent. Forms heterodimer with SERPINA5. In terms of processing, thrombin activates factor V proteolytically to the active cofactor, factor Va (formation of a heavy chain at the N-terminus and a light chain at the C-terminus). Sulfation is required for efficient thrombin cleavage and activation and for full procoagulant activity. Post-translationally, activated protein C inactivates factor V and factor Va by proteolytic degradation.

The protein resides in the secreted. With respect to regulation, inhibited by SERPINA5. Functionally, central regulator of hemostasis. It serves as a critical cofactor for the prothrombinase activity of factor Xa that results in the activation of prothrombin to thrombin. This chain is Coagulation factor V (F5), found in Bos taurus (Bovine).